Here is a 276-residue protein sequence, read N- to C-terminus: uncharacterized protein (276 aa).

This is an uncharacterized protein from Acanthamoeba polyphaga mimivirus (APMV).